Reading from the N-terminus, the 340-residue chain is uncharacterized protein (340 aa).

The helical transmembrane segment at 6–26 threads the bilayer; it reads ITFGLLVLMVCVILFVLYVQL.

It is found in the cell membrane. This is an uncharacterized protein from Bacillus subtilis (strain 168).